The following is a 436-amino-acid chain: Serine--tRNA ligase (436 aa).

239 to 241 (TAE) contacts L-serine. ATP is bound at residue 270-272 (RKE). Glu-293 lines the L-serine pocket. 357 to 360 (EISS) serves as a coordination point for ATP. Ser-392 is an L-serine binding site.

The protein belongs to the class-II aminoacyl-tRNA synthetase family. Type-1 seryl-tRNA synthetase subfamily. Homodimer. The tRNA molecule binds across the dimer.

The protein resides in the cytoplasm. The catalysed reaction is tRNA(Ser) + L-serine + ATP = L-seryl-tRNA(Ser) + AMP + diphosphate + H(+). The enzyme catalyses tRNA(Sec) + L-serine + ATP = L-seryl-tRNA(Sec) + AMP + diphosphate + H(+). Its pathway is aminoacyl-tRNA biosynthesis; selenocysteinyl-tRNA(Sec) biosynthesis; L-seryl-tRNA(Sec) from L-serine and tRNA(Sec): step 1/1. In terms of biological role, catalyzes the attachment of serine to tRNA(Ser). Is also able to aminoacylate tRNA(Sec) with serine, to form the misacylated tRNA L-seryl-tRNA(Sec), which will be further converted into selenocysteinyl-tRNA(Sec). The chain is Serine--tRNA ligase from Leuconostoc citreum (strain KM20).